A 326-amino-acid chain; its full sequence is Fructose-1,6-bisphosphatase class 1 (326 aa).

This sequence belongs to the FBPase class 1 family. Homotetramer.

It localises to the cytoplasm. It catalyses the reaction beta-D-fructose 1,6-bisphosphate + H2O = beta-D-fructose 6-phosphate + phosphate. It participates in carbohydrate biosynthesis; gluconeogenesis. In Methylobacterium sp. (strain 4-46), this protein is Fructose-1,6-bisphosphatase class 1.